Reading from the N-terminus, the 365-residue chain is Tubulin-like protein CetZ (365 aa).

GTP contacts are provided by residues 10-14 (QCGTK), 103-105 (GTG), E136, N163, and N181.

The protein belongs to the CetZ family.

The protein localises to the cytoplasm. Its function is as follows. Involved in cell shape control. The chain is Tubulin-like protein CetZ from Pyrococcus horikoshii (strain ATCC 700860 / DSM 12428 / JCM 9974 / NBRC 100139 / OT-3).